A 136-amino-acid polypeptide reads, in one-letter code: Endonuclease II (136 aa).

Residues 32–131 enclose the GIY-YIG domain; it reads KYNVIYAIAI…IKLFNPPWNI (100 aa).

As to quaternary structure, homotetramer. Mg(2+) serves as cofactor.

The catalysed reaction is Endonucleolytic nicking and cleavage of cytosine-containing double-stranded DNA.. In terms of biological role, contributes to the degradation of host DNA, permitting the scavenging of host-derived nucleotides for phage DNA synthesis. Sequence-specific endonuclease. Catalyzes nicking of the bottom strand of double-stranded DNA between the first and second base pair to the right of a top-strand CCGC motif. Does not cleave native phage DNA, which contains 5-hydroxymethylcytosine instead of cytosine. The chain is Endonuclease II (denA) from Escherichia coli (Bacteriophage T4).